Here is a 150-residue protein sequence, read N- to C-terminus: Putative biopolymer transport protein ExbB-like 2 (150 aa).

Transmembrane regions (helical) follow at residues 5–25 (VDYG…AIAI), 63–83 (APYI…MDLG), and 97–117 (LALA…AIVI).

It belongs to the ExbB/TolQ family.

It is found in the cell inner membrane. The sequence is that of Putative biopolymer transport protein ExbB-like 2 from Helicobacter pylori (strain J99 / ATCC 700824) (Campylobacter pylori J99).